Reading from the N-terminus, the 811-residue chain is Leucine--tRNA ligase (811 aa).

The short motif at 38–49 is the 'HIGH' region element; sequence SYPSGSNLHAGH. The 'KMSKS' region signature appears at 570 to 574; the sequence is KMSKS. Position 573 (Lys573) interacts with ATP.

Belongs to the class-I aminoacyl-tRNA synthetase family.

It localises to the cytoplasm. It carries out the reaction tRNA(Leu) + L-leucine + ATP = L-leucyl-tRNA(Leu) + AMP + diphosphate. The protein is Leucine--tRNA ligase of Clostridium kluyveri (strain ATCC 8527 / DSM 555 / NBRC 12016 / NCIMB 10680 / K1).